A 295-amino-acid polypeptide reads, in one-letter code: GTPase Era (295 aa).

The Era-type G domain maps to 4 to 171 (KSGFVTIIGR…INLIVQYLPE (168 aa)). The interval 12-19 (GRPNVGKS) is G1. 12–19 (GRPNVGKS) is a binding site for GTP. The tract at residues 38-42 (QTTRN) is G2. The interval 59–62 (DTPG) is G3. GTP is bound by residues 59–63 (DTPGI) and 121–124 (NKID). Positions 121-124 (NKID) are G4. The tract at residues 150 to 152 (ISA) is G5. In terms of domain architecture, KH type-2 spans 194–280 (IREKILHYTD…YLELWVKVKE (87 aa)).

Belongs to the TRAFAC class TrmE-Era-EngA-EngB-Septin-like GTPase superfamily. Era GTPase family. As to quaternary structure, monomer.

It localises to the cytoplasm. The protein resides in the cell membrane. Functionally, an essential GTPase that binds both GDP and GTP, with rapid nucleotide exchange. Plays a role in 16S rRNA processing and 30S ribosomal subunit biogenesis and possibly also in cell cycle regulation and energy metabolism. The polypeptide is GTPase Era (Alkaliphilus oremlandii (strain OhILAs) (Clostridium oremlandii (strain OhILAs))).